Reading from the N-terminus, the 153-residue chain is Pheromone-binding protein Gp-9 (153 aa).

Residues 1–19 form the signal peptide; sequence MKTFVLHIFIFALVAFASA. 3 cysteine pairs are disulfide-bonded: cysteine 37/cysteine 77, cysteine 73/cysteine 129, and cysteine 118/cysteine 138.

This sequence belongs to the PBP/GOBP family. Homodimer.

It localises to the secreted. Its function is as follows. Colony queen number, a major feature of social organization, is associated with worker genotype for Gp-9. Colonies are headed by either a single reproductive queen (monogyne form) or multiple queens (polygyne form). Differences in worker Gp-9 genotypes between social forms may cause differences in workers' abilities to recognize queens and regulate their numbers. This chain is Pheromone-binding protein Gp-9, found in Solenopsis interrupta (Fire ant).